The chain runs to 208 residues: uncharacterized protein (208 aa).

The first 34 residues, methionine 1 to alanine 34, serve as a signal peptide directing secretion.

This is an uncharacterized protein from Sinorhizobium fredii (strain NBRC 101917 / NGR234).